Here is a 178-residue protein sequence, read N- to C-terminus: Cytochrome b6-f complex iron-sulfur subunit (178 aa).

The helical transmembrane segment at 20-42 (LLTFGTATGVALGALYPVANYFM) threads the bilayer. A Rieske domain is found at 65–161 (KTGWLANHQA…VDVDDDAVLV (97 aa)). Residues cysteine 107, histidine 109, cysteine 125, and histidine 128 each contribute to the [2Fe-2S] cluster site. Cysteine 112 and cysteine 127 form a disulfide bridge.

Belongs to the Rieske iron-sulfur protein family. In terms of assembly, the 4 large subunits of the cytochrome b6-f complex are cytochrome b6, subunit IV (17 kDa polypeptide, PetD), cytochrome f and the Rieske protein, while the 4 small subunits are PetG, PetL, PetM and PetN. The complex functions as a dimer. The cofactor is [2Fe-2S] cluster.

It is found in the cellular thylakoid membrane. The enzyme catalyses 2 oxidized [plastocyanin] + a plastoquinol + 2 H(+)(in) = 2 reduced [plastocyanin] + a plastoquinone + 4 H(+)(out). Component of the cytochrome b6-f complex, which mediates electron transfer between photosystem II (PSII) and photosystem I (PSI), cyclic electron flow around PSI, and state transitions. The protein is Cytochrome b6-f complex iron-sulfur subunit of Prochlorococcus marinus (strain MIT 9515).